Reading from the N-terminus, the 171-residue chain is Shikimate kinase (171 aa).

An ATP-binding site is contributed by 11 to 16 (GTGKTT). Thr15 contacts Mg(2+). Asp33, Arg57, and Gly79 together coordinate substrate. Arg117 serves as a coordination point for ATP. Arg136 provides a ligand contact to substrate.

This sequence belongs to the shikimate kinase family. In terms of assembly, monomer. Requires Mg(2+) as cofactor.

It is found in the cytoplasm. The catalysed reaction is shikimate + ATP = 3-phosphoshikimate + ADP + H(+). It functions in the pathway metabolic intermediate biosynthesis; chorismate biosynthesis; chorismate from D-erythrose 4-phosphate and phosphoenolpyruvate: step 5/7. Its function is as follows. Catalyzes the specific phosphorylation of the 3-hydroxyl group of shikimic acid using ATP as a cosubstrate. This chain is Shikimate kinase, found in Caldanaerobacter subterraneus subsp. tengcongensis (strain DSM 15242 / JCM 11007 / NBRC 100824 / MB4) (Thermoanaerobacter tengcongensis).